The sequence spans 625 residues: Alpha-protein kinase vwkA (625 aa).

The segment covering 1 to 15 (MESKYVLSTEKESKT) has biased composition (basic and acidic residues). The disordered stretch occupies residues 1-64 (MESKYVLSTE…GLSSGGSKTH (64 aa)). 2 stretches are compositionally biased toward polar residues: residues 25 to 39 (DMDS…TSLG) and 46 to 63 (SLKT…GSKT). Positions 87-114 (TKDSITLAKEKEKKIEKRNEEIKLTFKA) form a coiled coil. Residues 122–322 (DLLFIVDCTG…KMNERIFISI (201 aa)) enclose the VWFA domain. In terms of domain architecture, Alpha-type protein kinase spans 386–600 (TCLSSSYEMK…HCKKLGLTIP (215 aa)). 570 to 576 (GSCNLGK) is a binding site for ATP. The tract at residues 602-625 (FTSSSSTSSSSRSTSSSSSISYSY) is disordered.

It belongs to the protein kinase superfamily. Alpha-type protein kinase family. ALPK subfamily. In terms of assembly, interacts with calmodulin; in the presence of calcium. In terms of processing, autophosphorylated, in vitro.

The protein resides in the cytoplasm. The protein localises to the cytosol. It localises to the perinuclear region. Its subcellular location is the contractile vacuole membrane. The enzyme catalyses L-seryl-[protein] + ATP = O-phospho-L-seryl-[protein] + ADP + H(+). It catalyses the reaction L-threonyl-[protein] + ATP = O-phospho-L-threonyl-[protein] + ADP + H(+). Autophosphorylation activity enhanced by calcium/calmodulin. In terms of biological role, displays a modest preference for threonine over serine residues. Does not phosphorylate myosin II, however can phosphorylate MBP, in vitro. May be involved in the regulation of myosin II function during cytokinesis. Overexpression leads to impaired cell proliferation in suspension culture and fails to develop beyond the mound stage. Both overexpression and absence of the gene can result in defects in cytokinesis and alterations in myosin II abundance and assembly. This is Alpha-protein kinase vwkA (vwkA) from Dictyostelium discoideum (Social amoeba).